We begin with the raw amino-acid sequence, 293 residues long: tRNA pseudouridine synthase B (293 aa).

D38 acts as the Nucleophile in catalysis.

It belongs to the pseudouridine synthase TruB family. Type 1 subfamily.

It catalyses the reaction uridine(55) in tRNA = pseudouridine(55) in tRNA. Its function is as follows. Responsible for synthesis of pseudouridine from uracil-55 in the psi GC loop of transfer RNAs. In Solibacter usitatus (strain Ellin6076), this protein is tRNA pseudouridine synthase B.